Here is a 1252-residue protein sequence, read N- to C-terminus: MFKCPERVSVKKKEDILDLPNLIEIQIKSYKQFLQIGKLAEERDNVGLEEVFREIFPIKSYNEATILEYLSYNLGVPKYSPEECIRRGITYSVTLKVRFRLTDETGIKEEEVYMGTIPIMTDKGTFIINGAERVVVSQVHRSPGINFEQEKHSKGNILFSFRIIPYRGSWLEAIFDINDLIYIHIDRKKRRRKILAMTFIRALGYSSDADIIEEFFQIEECSLKSEKDFSVLVGKILADNVLDEASSLVYGKAGEKLSTAMLKRMLDADISTLKIALEADENHPIIKMLAKDPTDSYEAALKDFYRRLRPGEPATLANARSTIMRLFFDPKRYNLGRVGRYKLNRKLGFPMDEESLSQVTLRKEDVIGALKYLIRLKMGDEKASIDDIDHLANRRVRSVGELIQNQCRSGLARMEKIVRERMNLFDFSSDTLIPGKIISAKGLTSVLKDFFGRSQLSQFMDQTNPVAELTHKRRLSALGPGGLNRERAGFEVRDVHASHYGRICPIETPEGPNIGLITSLSSFAKINEFGFIETPYRIVRDGVVTDEIEYMTADVEEECVIAQASANLDEYNMFTDPVCWARYRGEAFEADTSTVTHMDVSPKQLVSIVTGLIPFLEHDDANRALMGSNMQRQAVPLLKTEAPIVGTGLEARAAKDSGAIVVAEEDGVVEYVDGYKVVVAAKHNPTLKRTYEFKKFLRSNSGTCINQRPLCSVGDIVVKGDVIADGPATDQGELALGKNILVAFMPWYGYNFEDAVIISEKLIKQDAYTSIYIEEFELTARDTKLGKEEITRDIPNVSEEVLANLGEDGIIRIGAEVKPGDILVGKITPKSETELAPEERLLRAIFGEKAADVKDASLTVPPGTEGVVMDVKVFSRKDRLSKSDDELVEEAVHLKDLQKGYKNQISVLKTEYREKLGALLLNEKAPASIIHRRTADILVQEGTVFDQETIELLEQESLVDLLMPPCDMYDVLKNLLSDYETSLQRLEVNYKTEVEHIREGDADLDHGVIRQVKVYVASKRKLQVGDKMAGRHGNKGVVSKIVPEADMPYLANGETIQMILNPLGVPSRMNLGQVLETHLGYAAKTAGIHVKTPVFEGFPESRIWDMMIEQGLPADGKSYLYDGKTGERFDNTVVIGYIYMLKLSHLIADKIHARSIGPYSLVTQQPLGGKAQMGGQRFGEMEVWALEAYGVAHMLQEILTVKSDDVSGRTRIYESIVKGENLLKSGTPESFNVLIKEMQGLGLDVRPMVVDA.

Belongs to the RNA polymerase beta chain family. In terms of assembly, the RNAP catalytic core consists of 2 alpha, 1 beta, 1 beta' and 1 omega subunit. When a sigma factor is associated with the core the holoenzyme is formed, which can initiate transcription.

The enzyme catalyses RNA(n) + a ribonucleoside 5'-triphosphate = RNA(n+1) + diphosphate. DNA-dependent RNA polymerase catalyzes the transcription of DNA into RNA using the four ribonucleoside triphosphates as substrates. The chain is DNA-directed RNA polymerase subunit beta from Chlamydia felis (strain Fe/C-56) (Chlamydophila felis).